The primary structure comprises 798 residues: Probable serine/threonine-protein kinase DDB_G0276461 (798 aa).

A Protein kinase domain is found at 54 to 324; it reads VTEVKLVAEG…DLLNYLNEIR (271 aa). ATP-binding positions include 60–68 and Lys-82; that span reads VAEGGFGFV. Catalysis depends on Asp-185, which acts as the Proton acceptor. Disordered regions lie at residues 330–538, 553–645, and 659–798; these read GLQT…NGNF, TNGS…SYNN, and SSAS…FGIL. Composition is skewed to low complexity over residues 335-406, 429-490, 506-538, 557-603, 611-642, and 659-678; these read SSNN…NTPN, SNSN…NNNN, PSPSNSNSNVIINNTNSSGKNNQNKSNSGNGNF, TNFE…INNS, SSGSLPQSRQSSFNSTPQQQQQQFNSSTNSGS, and SSASISSSGGVSNNSDNSWN. The span at 679–697 shows a compositional bias: polar residues; the sequence is VTLTPSQSNKNSTGNLKPL. Over residues 698-716 the composition is skewed to low complexity; that stretch reads NNNNNNNNNNNNRFANNTN. Positions 717-769 are enriched in polar residues; that stretch reads SSRDYSFDFSSPNTSNNNDFGSFVQPSSSSSLNTTHFSKPNYNVNLNQTTSMT. Over residues 770 to 790 the composition is skewed to low complexity; the sequence is NNYNNNNYNNNNNSNNNNNNS.

The protein belongs to the protein kinase superfamily. Ser/Thr protein kinase family.

The enzyme catalyses L-seryl-[protein] + ATP = O-phospho-L-seryl-[protein] + ADP + H(+). The catalysed reaction is L-threonyl-[protein] + ATP = O-phospho-L-threonyl-[protein] + ADP + H(+). This Dictyostelium discoideum (Social amoeba) protein is Probable serine/threonine-protein kinase DDB_G0276461.